We begin with the raw amino-acid sequence, 431 residues long: Glutamate-1-semialdehyde 2,1-aminomutase (431 aa).

N6-(pyridoxal phosphate)lysine is present on Lys270.

Belongs to the class-III pyridoxal-phosphate-dependent aminotransferase family. HemL subfamily. Homodimer. The cofactor is pyridoxal 5'-phosphate.

The protein localises to the cytoplasm. It catalyses the reaction (S)-4-amino-5-oxopentanoate = 5-aminolevulinate. Its pathway is porphyrin-containing compound metabolism; protoporphyrin-IX biosynthesis; 5-aminolevulinate from L-glutamyl-tRNA(Glu): step 2/2. The sequence is that of Glutamate-1-semialdehyde 2,1-aminomutase from Limosilactobacillus reuteri subsp. reuteri (strain JCM 1112) (Lactobacillus reuteri).